Here is a 368-residue protein sequence, read N- to C-terminus: Glutamate 5-kinase (368 aa).

Position 12 (Lys-12) interacts with ATP. Substrate contacts are provided by Ser-52, Asp-139, and Asn-151. Residues 171 to 172 (SD) and 213 to 219 (TGGMKTK) each bind ATP. The region spanning 277 to 354 (KGALIIDDGA…KEIEKLLGYI (78 aa)) is the PUA domain.

Belongs to the glutamate 5-kinase family.

Its subcellular location is the cytoplasm. The catalysed reaction is L-glutamate + ATP = L-glutamyl 5-phosphate + ADP. It participates in amino-acid biosynthesis; L-proline biosynthesis; L-glutamate 5-semialdehyde from L-glutamate: step 1/2. Catalyzes the transfer of a phosphate group to glutamate to form L-glutamate 5-phosphate. The protein is Glutamate 5-kinase of Pelagibacter ubique (strain HTCC1062).